We begin with the raw amino-acid sequence, 217 residues long: Probable transaldolase (217 aa).

Residue K84 is the Schiff-base intermediate with substrate of the active site.

This sequence belongs to the transaldolase family. Type 3B subfamily.

The protein localises to the cytoplasm. It catalyses the reaction D-sedoheptulose 7-phosphate + D-glyceraldehyde 3-phosphate = D-erythrose 4-phosphate + beta-D-fructose 6-phosphate. Its pathway is carbohydrate degradation; pentose phosphate pathway; D-glyceraldehyde 3-phosphate and beta-D-fructose 6-phosphate from D-ribose 5-phosphate and D-xylulose 5-phosphate (non-oxidative stage): step 2/3. Its function is as follows. Transaldolase is important for the balance of metabolites in the pentose-phosphate pathway. This chain is Probable transaldolase, found in Roseiflexus castenholzii (strain DSM 13941 / HLO8).